The primary structure comprises 137 residues: Putative transcription elongation factor S-II-like protein 055R (137 aa).

The TFIIS-type zinc-finger motif lies at 85–136 (DFITCPYEVSEGVLRCGKCDCTKILWFSKQTRSMDEPTTIFASCSNCKTRWT). Zn(2+) contacts are provided by Cys-89, Cys-103, Cys-128, and Cys-131.

Belongs to the IIV-6 349L family.

This Aedes vexans (Inland floodwater mosquito) protein is Putative transcription elongation factor S-II-like protein 055R.